We begin with the raw amino-acid sequence, 354 residues long: MEQNWFFPPHQGIRLGDLANQIGAELLDISAADRTVRAVAPVYRAKPGDICYMLSRKNREELQTCRAAAIICDKAISSLVPDTIPVLLTSKPHTAFALAGTLLHERAMRPSYNTSERGVAPEAFVDPTARLEAGVEVEPMAVIGAGAEIGSGTRIAAGAMIGQGVRIGRDCTISAGASILCALIGNNVIIHPGARIGQDGFGYAPGPKGGMIKIVQVGRVIIQDHVEIGANTTIDRGTMDDTVIGEGTKIDNLVQIGHNVRIGRYCGIVSQVGIAGSTQIGDGVMIGGGVGVNGHITIGDGAQIAAMSGVASDVPAGERYGGIPARPMRDFLRDVAEMALRSSERQKKKGGKDE.

His-258 functions as the Proton acceptor in the catalytic mechanism.

The protein belongs to the transferase hexapeptide repeat family. LpxD subfamily. Homotrimer.

The enzyme catalyses a UDP-3-O-[(3R)-3-hydroxyacyl]-alpha-D-glucosamine + a (3R)-hydroxyacyl-[ACP] = a UDP-2-N,3-O-bis[(3R)-3-hydroxyacyl]-alpha-D-glucosamine + holo-[ACP] + H(+). Its pathway is bacterial outer membrane biogenesis; LPS lipid A biosynthesis. Functionally, catalyzes the N-acylation of UDP-3-O-acylglucosamine using 3-hydroxyacyl-ACP as the acyl donor. Is involved in the biosynthesis of lipid A, a phosphorylated glycolipid that anchors the lipopolysaccharide to the outer membrane of the cell. The chain is UDP-3-O-acylglucosamine N-acyltransferase from Rhizobium meliloti (strain 1021) (Ensifer meliloti).